A 355-amino-acid chain; its full sequence is Tetraspanin-10 (355 aa).

The interval Met-1–Pro-33 is disordered. At Met-1–Tyr-78 the chain is on the cytoplasmic side. Residues Leu-79–Leu-99 traverse the membrane as a helical segment. Topologically, residues Trp-100 to Pro-120 are extracellular. Residues Met-121–Gly-141 form a helical membrane-spanning segment. The Cytoplasmic portion of the chain corresponds to Ala-142 to Ser-154. Residues Gly-155–Trp-175 form a helical membrane-spanning segment. The Extracellular portion of the chain corresponds to Gly-176–Gly-355. Disulfide bonds link Cys-212–Cys-279, Cys-213–Cys-243, Cys-229–Cys-237, and Cys-244–Cys-258. Residue Asn-228 is glycosylated (N-linked (GlcNAc...) asparagine). Residues Tyr-327–Gly-355 form a disordered region. Residues Ser-341–Gly-355 show a composition bias toward pro residues.

Belongs to the tetraspanin (TM4SF) family. Interacts with ADAM10. As to expression, expressed in the eye, including iris, ciliary body, retinal pigment epithelium, but not lens (protein level).

It is found in the cell membrane. Part of TspanC8 subgroup, composed of 6 members that interact with the transmembrane metalloprotease ADAM10. This interaction is required for ADAM10 exit from the endoplasmic reticulum and for enzymatic maturation and trafficking to the cell surface as well as substrate specificity. Different TspanC8/ADAM10 complexes have distinct substrates. This chain is Tetraspanin-10, found in Homo sapiens (Human).